Here is an 855-residue protein sequence, read N- to C-terminus: Inactive rhomboid protein 1 (855 aa).

The Cytoplasmic portion of the chain corresponds to 1 to 411; the sequence is MSEARRDSTS…HRPFFTYWLT (411 aa). Ser-76 and Ser-176 each carry phosphoserine. 2 positions are modified to phosphothreonine: Thr-180 and Thr-183. Ser-390 carries the phosphoserine modification. A helical membrane pass occupies residues 412–432; it reads FVHSLVTILAVCIYGIAPVGF. Over 433 to 655 the chain is Lumenal; the sequence is SQHETVDSVL…NPEVPDQFYR (223 aa). The N-linked (GlcNAc...) asparagine glycan is linked to Asn-583. Residues 656 to 676 traverse the membrane as a helical segment; it reads LWLSLFLHAGILHCLVSICFQ. At 677 to 691 the chain is on the cytoplasmic side; sequence MTVLRDLEKLAGWHR. The helical transmembrane segment at 692 to 712 threads the bilayer; sequence IAIIYLLSGVTGNLASAIFLP. The Lumenal segment spans residues 713 to 714; sequence YR. Residues 715 to 735 traverse the membrane as a helical segment; it reads AEVGPAGSQFGILACLFVELF. The Cytoplasmic segment spans residues 736 to 746; it reads QSWQILARPWR. The helical transmembrane segment at 747–767 threads the bilayer; sequence AFFKLLAVVLFLFTFGLLPWI. The Lumenal segment spans residues 768-772; the sequence is DNFAH. Residues 773-793 traverse the membrane as a helical segment; it reads ISGFISGLFLSFAFLPYISFG. Topologically, residues 794–803 are cytoplasmic; that stretch reads KFDLYRKRCQ. Residues 804–824 form a helical membrane-spanning segment; it reads IIIFQVVFLGLLAGLVVLFYV. Residues 825–855 lie on the Lumenal side of the membrane; sequence YPVRCEWCEFLTCIPFTDKFCEKYELDAQLH.

The protein belongs to the peptidase S54 family. In terms of assembly, homodimer, or homooligomer. Interacts with TGFA and HBEGF. Interacts with EGF; may retain EGF in the endoplasmic reticulum and regulates its degradation through the endoplasmic reticulum-associated degradation (ERAD). Interacts (via cytoplasmic N-terminus) with FRMD8/iTAP; this interaction leads to mutual protein stabilization. Interacts with ADAM17/TACE. In terms of processing, N-glycosylated. Highly expressed in cerebellum, cerebrum, heart, skeletal muscle, placenta, pancreatic islet and testis. Detected at lower levels in colon, kidney, small intestine and lung.

It localises to the endoplasmic reticulum membrane. It is found in the golgi apparatus membrane. Regulates ADAM17 protease, a sheddase of the epidermal growth factor (EGF) receptor ligands and TNF, thereby plays a role in sleep, cell survival, proliferation, migration and inflammation. Does not exhibit any protease activity on its own. This chain is Inactive rhomboid protein 1 (RHBDF1), found in Homo sapiens (Human).